The chain runs to 326 residues: Meiotically up-regulated gene 113 protein (326 aa).

It is found in the cytoplasm. In terms of biological role, has a role in meiosis. This Schizosaccharomyces pombe (strain 972 / ATCC 24843) (Fission yeast) protein is Meiotically up-regulated gene 113 protein (mug113).